A 296-amino-acid polypeptide reads, in one-letter code: Glycine--tRNA ligase alpha subunit (296 aa).

The protein belongs to the class-II aminoacyl-tRNA synthetase family. Tetramer of two alpha and two beta subunits.

The protein resides in the cytoplasm. The catalysed reaction is tRNA(Gly) + glycine + ATP = glycyl-tRNA(Gly) + AMP + diphosphate. This is Glycine--tRNA ligase alpha subunit from Synechococcus sp. (strain WH7803).